The following is a 92-amino-acid chain: Phospholemman (92 aa).

The N-terminal stretch at 1-20 is a signal peptide; it reads MASLSHILVLCVGLLAMVNA. Residues 21–35 lie on the Extracellular side of the membrane; the sequence is EAPQEHDPFTYDYQS. The chain crosses the membrane as a helical span at residues 36–56; sequence LRIGGLIIAGILFILGILIVL. The Cytoplasmic segment spans residues 57-92; that stretch reads SRRCRCKFNQQQRTGEPDEEEGTFRSSIRRLSTRRR. Cys60 carries S-palmitoyl cysteine lipidation. S-glutathionyl cysteine; alternate is present on Cys62. Cys62 is lipidated: S-palmitoyl cysteine; alternate. The disordered stretch occupies residues 65–92; sequence NQQQRTGEPDEEEGTFRSSIRRLSTRRR. Residue Thr79 is modified to Phosphothreonine. Position 82 is a phosphoserine (Ser82). Ser83 bears the Phosphoserine; by PKA and PKC mark. Residues 83–92 are compositionally biased toward basic residues; sequence SIRRLSTRRR. Ser88 is subject to Phosphoserine; by PKA. At Thr89 the chain carries Phosphothreonine; by PKC.

It belongs to the FXYD family. In terms of assembly, homotetramer. Monomer. Regulatory subunit of the sodium/potassium-transporting ATPase (NKA) which is composed of a catalytic alpha subunit, an auxiliary non-catalytic beta subunit and an additional regulatory subunit. The monomeric form associates with NKA while the oligomeric form does not. Interacts with the catalytic alpha-1 subunit ATP1A1. Also interacts with the catalytic alpha-2 and alpha-3 subunits ATP1A2 and ATP1A3. Very little interaction with ATP1A1, ATP1A2 or ATP1A3 when phosphorylated at Ser-83. Interacts with the non-catalytic beta-1 subunit ATP1B1. Oxidative stress decreases interaction with ATP1A1 but increases interaction with ATP1B1. Major plasma membrane substrate for cAMP-dependent protein kinase (PKA) and protein kinase C (PKC) in several different tissues. Phosphorylated in response to insulin and adrenergic stimulation. Phosphorylation at Ser-88 stimulates sodium/potassium-transporting ATPase activity while the unphosphorylated form inhibits sodium/potassium-transporting ATPase activity. Phosphorylation increases tetramerization, decreases binding to ATP1A1 and reduces inhibition of ATP1A1 activity. Phosphorylation at Ser-83 leads to greatly reduced interaction with ATP1A1, ATP1A2 and ATP1A3. May be phosphorylated by DMPK. Post-translationally, palmitoylation increases half-life and stability and is enhanced upon phosphorylation at Ser-88 by PKA. In terms of tissue distribution, in the brain, detected in cerebellum and choroid plexus (at protein level).

The protein localises to the cell membrane. It is found in the sarcolemma. The protein resides in the apical cell membrane. It localises to the membrane. Its subcellular location is the caveola. The protein localises to the T-tubule. Its function is as follows. Associates with and regulates the activity of the sodium/potassium-transporting ATPase (NKA) which transports Na(+) out of the cell and K(+) into the cell. Inhibits NKA activity in its unphosphorylated state and stimulates activity when phosphorylated. Reduces glutathionylation of the NKA beta-1 subunit ATP1B1, thus reversing glutathionylation-mediated inhibition of ATP1B1. Contributes to female sexual development by maintaining the excitability of neurons which secrete gonadotropin-releasing hormone. The protein is Phospholemman of Bos taurus (Bovine).